Here is a 1097-residue protein sequence, read N- to C-terminus: MSSSALQVAKTGTYLPDLVEVQRASFKWFLEKGLIEELQNFSPISDYTGKLELHFIGEEYRLKRPRHDVEEAKRRDATFASQMYVTCRLINKETGEIKEQEVFIGELPLMTERGTFIINGAERVIVNQIVRSPGVYFKDEQDKNGRRTYNASVIPNRGAWLKFETDKNNLLYVRVDKTRKINAHVLMRAMGLSDNDVVDKLRHPEFYQNSIESANDEGINSEDQALLELYKKLRPGEPPSVSGGQQLLFSRFFDPKRYDLGRVGRYKINKKLRLTVPDDVRTLTHEDVLSTIDYLINLELDIGGASLDDIDHLGNRRVRSVGELLQNQVRVGLNRLERIIKERMTVGETDSLTPAQLVNPKPLVAAIKEFFGSSQLSQFMDQTNPLAELTHKRRISALGPGGLTRERAGFAVRDIHPSHYGRLCPIETPEGPNAGLINSLATHARVNEYGFIETPFWKVNNGKVNKDGDPIYLSADLEDECRVAPGDVATDKDGNILANLIPVRYRQDFEKVPPEQVDYVQLSPVQVISVATSLIPFLEHDDANRALMGSNMQRQAVPLLRPERPLVGTGLESQVARDSGMVPITKVNGTVSYVDANEIVVKGEDGNEHFHYLQKYQRSNQDTCLNQRPIVNIGDQVISGQVLADGSACEGGEIALGQNVLIAYMPWEGYNYEDAILVSERMVTDDLYTSVHIEKYEIEARQTKLGPEEITREIPNISEDSLNNLDEMGIIRIGAFVESGDILVGKVTPKGESDQPPEEKLLRAIFGEKARDVRDNSLRVPKTEKGRVLDVRIYTREQGDELPPGANMVVRVYVAQRRKIQVGDKMAGRHGNKGIISRILPREDMPYLPDGTPVDIVLNPLGVPSRMNVGQVFELLMGWAASNLNCRVKVVPFDEMYGAEKSHQTVQAFLEEASKQPGKAWIYNPEDPGKLLLKDGRTGEPFDQPVAVGYSHFLKLVHLVDDKIHARSTGPYSLVTQQPLGGKAQQGGQRLGEMEVWALEAYGAAYTLQELLTVKSDDMQGRNEALNAIVKGKPIPRPGTPESFKVLMRELQSLGLDIGVYTDEGKEVDLMQDINPRRNTPSRPTYESLGTSEYEED.

Positions aspartate 1073–aspartate 1097 are disordered. Positions arginine 1077–threonine 1091 are enriched in polar residues.

This sequence belongs to the RNA polymerase beta chain family. In terms of assembly, in cyanobacteria the RNAP catalytic core is composed of 2 alpha, 1 beta, 1 beta', 1 gamma and 1 omega subunit. When a sigma factor is associated with the core the holoenzyme is formed, which can initiate transcription.

The catalysed reaction is RNA(n) + a ribonucleoside 5'-triphosphate = RNA(n+1) + diphosphate. In terms of biological role, DNA-dependent RNA polymerase catalyzes the transcription of DNA into RNA using the four ribonucleoside triphosphates as substrates. This chain is DNA-directed RNA polymerase subunit beta, found in Prochlorococcus marinus (strain MIT 9312).